The primary structure comprises 201 residues: Ribosomal RNA large subunit methyltransferase E (201 aa).

The S-adenosyl-L-methionine site is built by glycine 49, tryptophan 51, aspartate 69, aspartate 87, and aspartate 111. Lysine 151 (proton acceptor) is an active-site residue.

It belongs to the class I-like SAM-binding methyltransferase superfamily. RNA methyltransferase RlmE family.

It localises to the cytoplasm. The catalysed reaction is uridine(2552) in 23S rRNA + S-adenosyl-L-methionine = 2'-O-methyluridine(2552) in 23S rRNA + S-adenosyl-L-homocysteine + H(+). Specifically methylates the uridine in position 2552 of 23S rRNA at the 2'-O position of the ribose in the fully assembled 50S ribosomal subunit. The polypeptide is Ribosomal RNA large subunit methyltransferase E (Nitratidesulfovibrio vulgaris (strain DSM 19637 / Miyazaki F) (Desulfovibrio vulgaris)).